Consider the following 226-residue polypeptide: ATP synthase F(0) complex subunit a (226 aa).

6 helical membrane passes run 14–34, 68–88, 97–117, 138–158, 164–184, and 193–213; these read ILGI…FSAP, WTLM…LGLL, QLSM…LMGF, IPML…ALAV, ITAG…LSSI, and FTIL…QAYV.

The protein belongs to the ATPase A chain family. In terms of assembly, component of the ATP synthase complex composed at least of ATP5F1A/subunit alpha, ATP5F1B/subunit beta, ATP5MC1/subunit c (homooctomer), MT-ATP6/subunit a, MT-ATP8/subunit 8, ATP5ME/subunit e, ATP5MF/subunit f, ATP5MG/subunit g, ATP5MK/subunit k, ATP5MJ/subunit j, ATP5F1C/subunit gamma, ATP5F1D/subunit delta, ATP5F1E/subunit epsilon, ATP5PF/subunit F6, ATP5PB/subunit b, ATP5PD/subunit d, ATP5PO/subunit OSCP. ATP synthase complex consists of a soluble F(1) head domain (subunits alpha(3) and beta(3)) - the catalytic core - and a membrane F(0) domain - the membrane proton channel (subunits c, a, 8, e, f, g, k and j). These two domains are linked by a central stalk (subunits gamma, delta, and epsilon) rotating inside the F1 region and a stationary peripheral stalk (subunits F6, b, d, and OSCP). Interacts with DNAJC30; interaction is direct.

It localises to the mitochondrion inner membrane. It catalyses the reaction H(+)(in) = H(+)(out). Functionally, subunit a, of the mitochondrial membrane ATP synthase complex (F(1)F(0) ATP synthase or Complex V) that produces ATP from ADP in the presence of a proton gradient across the membrane which is generated by electron transport complexes of the respiratory chain. ATP synthase complex consist of a soluble F(1) head domain - the catalytic core - and a membrane F(1) domain - the membrane proton channel. These two domains are linked by a central stalk rotating inside the F(1) region and a stationary peripheral stalk. During catalysis, ATP synthesis in the catalytic domain of F(1) is coupled via a rotary mechanism of the central stalk subunits to proton translocation. With the subunit c (ATP5MC1), forms the proton-conducting channel in the F(0) domain, that contains two crucial half-channels (inlet and outlet) that facilitate proton movement from the mitochondrial intermembrane space (IMS) into the matrix. Protons are taken up via the inlet half-channel and released through the outlet half-channel, following a Grotthuss mechanism. This Tachyglossus aculeatus aculeatus (Southeast Australian short-beaked echidna) protein is ATP synthase F(0) complex subunit a.